Consider the following 319-residue polypeptide: Malate dehydrogenase (319 aa).

NAD(+) is bound by residues 10-15 and aspartate 34; that span reads GAGNIG. Positions 83 and 89 each coordinate substrate. NAD(+) contacts are provided by residues asparagine 96 and 119-121; that span reads ITN. Substrate contacts are provided by asparagine 121 and arginine 152. The active-site Proton acceptor is the histidine 176.

It belongs to the LDH/MDH superfamily. MDH type 3 family.

The catalysed reaction is (S)-malate + NAD(+) = oxaloacetate + NADH + H(+). Its function is as follows. Catalyzes the reversible oxidation of malate to oxaloacetate. This is Malate dehydrogenase from Francisella tularensis subsp. holarctica (strain FTNF002-00 / FTA).